Here is a 292-residue protein sequence, read N- to C-terminus: Very long chain fatty acid elongase 2 (292 aa).

Helical transmembrane passes span 29 to 49, 67 to 87, 115 to 135, 153 to 173, 175 to 195, 205 to 225, and 230 to 250; these read WFLLDSYLPTFILTITYLLSI, ILTLYNLAITLLSAYMLVELI, VLWWYYFSKLVEFLDTIFFVL, MFNIWWCVLNWIPCGQSFFGP, LNSFIHILMYSYYGLSVFPSM, LTQAQLVQFVLTITHTLSAVV, and FPFGCLIFQSSYMMTLVILFL. Residues 289 to 292 carry the Di-lysine motif motif; it reads KKAQ.

Belongs to the ELO family. ELOVL2 subfamily. Interacts with TECR. As to expression, highly expressed in testis, lower level in liver. Weakly expressed in white adipose tissue, brain and kidney.

The protein resides in the endoplasmic reticulum membrane. It catalyses the reaction a very-long-chain acyl-CoA + malonyl-CoA + H(+) = a very-long-chain 3-oxoacyl-CoA + CO2 + CoA. The catalysed reaction is (5Z,8Z,11Z,14Z)-eicosatetraenoyl-CoA + malonyl-CoA + H(+) = (7Z,10Z,13Z,16Z)-3-oxodocosatetraenoyl-CoA + CO2 + CoA. It carries out the reaction (7Z,10Z,13Z,16Z)-docosatetraenoyl-CoA + malonyl-CoA + H(+) = (9Z,12Z,15Z,18Z)-3-oxotetracosatetraenoyl-CoA + CO2 + CoA. The enzyme catalyses (5Z,8Z,11Z,14Z,17Z)-eicosapentaenoyl-CoA + malonyl-CoA + H(+) = 3-oxo-(7Z,10Z,13Z,16Z,19Z)-docosapentaenoyl-CoA + CO2 + CoA. It catalyses the reaction (7Z,10Z,13Z,16Z,19Z)-docosapentaenoyl-CoA + malonyl-CoA + H(+) = (9Z,12Z,15Z,18Z,21Z)-3-oxotetracosapentaenoyl-CoA + CO2 + CoA. The protein operates within lipid metabolism; polyunsaturated fatty acid biosynthesis. Catalyzes the first and rate-limiting reaction of the four reactions that constitute the long-chain fatty acids elongation cycle. This endoplasmic reticulum-bound enzymatic process allows the addition of 2 carbons to the chain of long- and very long-chain fatty acids (VLCFAs) per cycle. Condensing enzyme that catalyzes the synthesis of polyunsaturated very long chain fatty acid (C20- and C22-PUFA), acting specifically toward polyunsaturated acyl-CoA with the higher activity toward C20:4(n-6) acyl-CoA. May participate in the production of polyunsaturated VLCFAs of different chain lengths that are involved in multiple biological processes as precursors of membrane lipids and lipid mediators. Essential for the formation of C24:5(n-6) up to C30:5(n-6) PUFAs in testis, these fatty acids being indispensable for normal spermatogenesis and fertility. In Mus musculus (Mouse), this protein is Very long chain fatty acid elongase 2.